Consider the following 626-residue polypeptide: Glucoamylase (626 aa).

The first 19 residues, 1 to 19, serve as a signal peptide directing secretion; it reads MHLVSSLLVVGAAFQAVLG. A propeptide spanning residues 20 to 35 is cleaved from the precursor; the sequence is LPDPLHEKRHSDIIKR. Residue asparagine 106 is glycosylated (N-linked (GlcNAc...) asparagine). Tryptophan 155 contacts substrate. Asparagine 206 carries an N-linked (GlcNAc...) asparagine glycan. Aspartate 211 acts as the Proton acceptor in catalysis. Catalysis depends on glutamate 214, which acts as the Proton donor. The N-linked (GlcNAc...) asparagine glycan is linked to asparagine 217. The CBM20 domain maps to 520–626; it reads CAADHEVLVT…STATLDDTWR (107 aa).

This sequence belongs to the glycosyl hydrolase 15 family.

It catalyses the reaction Hydrolysis of terminal (1-&gt;4)-linked alpha-D-glucose residues successively from non-reducing ends of the chains with release of beta-D-glucose.. The sequence is that of Glucoamylase (gla-1) from Neurospora crassa (strain ATCC 24698 / 74-OR23-1A / CBS 708.71 / DSM 1257 / FGSC 987).